Reading from the N-terminus, the 183-residue chain is NAD(P)H-quinone oxidoreductase subunit I, chloroplastic (183 aa).

4Fe-4S ferredoxin-type domains follow at residues 55-84 (GRIH…VDWE) and 95-124 (TSYS…MTEE). [4Fe-4S] cluster is bound by residues C64, C67, C70, C74, C104, C107, C110, and C114.

The protein belongs to the complex I 23 kDa subunit family. NDH is composed of at least 16 different subunits, 5 of which are encoded in the nucleus. Requires [4Fe-4S] cluster as cofactor.

It localises to the plastid. Its subcellular location is the chloroplast thylakoid membrane. The enzyme catalyses a plastoquinone + NADH + (n+1) H(+)(in) = a plastoquinol + NAD(+) + n H(+)(out). The catalysed reaction is a plastoquinone + NADPH + (n+1) H(+)(in) = a plastoquinol + NADP(+) + n H(+)(out). In terms of biological role, NDH shuttles electrons from NAD(P)H:plastoquinone, via FMN and iron-sulfur (Fe-S) centers, to quinones in the photosynthetic chain and possibly in a chloroplast respiratory chain. The immediate electron acceptor for the enzyme in this species is believed to be plastoquinone. Couples the redox reaction to proton translocation, and thus conserves the redox energy in a proton gradient. In Huperzia lucidula (Shining clubmoss), this protein is NAD(P)H-quinone oxidoreductase subunit I, chloroplastic.